The sequence spans 498 residues: Glutamate--tRNA ligase (498 aa).

A 'HIGH' region motif is present at residues 11-21; sequence PSPTGHLHIGN. A 'KMSKS' region motif is present at residues 260–264; it reads KLSKR. Lysine 263 contributes to the ATP binding site.

The protein belongs to the class-I aminoacyl-tRNA synthetase family. Glutamate--tRNA ligase type 1 subfamily. Monomer.

Its subcellular location is the cytoplasm. The catalysed reaction is tRNA(Glu) + L-glutamate + ATP = L-glutamyl-tRNA(Glu) + AMP + diphosphate. In terms of biological role, catalyzes the attachment of glutamate to tRNA(Glu) in a two-step reaction: glutamate is first activated by ATP to form Glu-AMP and then transferred to the acceptor end of tRNA(Glu). This chain is Glutamate--tRNA ligase, found in Leuconostoc mesenteroides subsp. mesenteroides (strain ATCC 8293 / DSM 20343 / BCRC 11652 / CCM 1803 / JCM 6124 / NCDO 523 / NBRC 100496 / NCIMB 8023 / NCTC 12954 / NRRL B-1118 / 37Y).